The sequence spans 282 residues: Ribosomal protein L11 methyltransferase (282 aa).

Residues Thr133, Gly154, Asp175, and Asn216 each contribute to the S-adenosyl-L-methionine site.

Belongs to the methyltransferase superfamily. PrmA family.

It is found in the cytoplasm. It catalyses the reaction L-lysyl-[protein] + 3 S-adenosyl-L-methionine = N(6),N(6),N(6)-trimethyl-L-lysyl-[protein] + 3 S-adenosyl-L-homocysteine + 3 H(+). Methylates ribosomal protein L11. The polypeptide is Ribosomal protein L11 methyltransferase (Campylobacter jejuni subsp. doylei (strain ATCC BAA-1458 / RM4099 / 269.97)).